A 307-amino-acid polypeptide reads, in one-letter code: Protein FAM76A (307 aa).

Disordered regions lie at residues 161 to 181 (SRLS…SSIQ) and 287 to 307 (KQAA…ITSP). Residues 217–297 (IIAQLKEEVA…QAAALSKGKK (81 aa)) adopt a coiled-coil conformation.

Belongs to the FAM76 family.

The chain is Protein FAM76A (FAM76A) from Gallus gallus (Chicken).